The sequence spans 550 residues: Chaperonin GroEL 1 (550 aa).

ATP contacts are provided by residues 30-33 (TLGP), Lys-51, 87-91 (DGTTT), Gly-415, and Asp-496.

This sequence belongs to the chaperonin (HSP60) family. Forms a cylinder of 14 subunits composed of two heptameric rings stacked back-to-back. Interacts with the co-chaperonin GroES.

The protein localises to the cytoplasm. It carries out the reaction ATP + H2O + a folded polypeptide = ADP + phosphate + an unfolded polypeptide.. Functionally, together with its co-chaperonin GroES, plays an essential role in assisting protein folding. The GroEL-GroES system forms a nano-cage that allows encapsulation of the non-native substrate proteins and provides a physical environment optimized to promote and accelerate protein folding. This chain is Chaperonin GroEL 1, found in Rhodopseudomonas palustris (strain HaA2).